The following is a 204-amino-acid chain: 3-isopropylmalate dehydratase small subunit (204 aa).

It belongs to the LeuD family. LeuD type 1 subfamily. In terms of assembly, heterodimer of LeuC and LeuD.

The enzyme catalyses (2R,3S)-3-isopropylmalate = (2S)-2-isopropylmalate. The protein operates within amino-acid biosynthesis; L-leucine biosynthesis; L-leucine from 3-methyl-2-oxobutanoate: step 2/4. In terms of biological role, catalyzes the isomerization between 2-isopropylmalate and 3-isopropylmalate, via the formation of 2-isopropylmaleate. In Psychromonas ingrahamii (strain DSM 17664 / CCUG 51855 / 37), this protein is 3-isopropylmalate dehydratase small subunit.